The sequence spans 428 residues: Adenylosuccinate synthetase (428 aa).

GTP contacts are provided by residues 12-18 (GDEGKGK) and 40-42 (GHT). Catalysis depends on aspartate 13, which acts as the Proton acceptor. Mg(2+) contacts are provided by aspartate 13 and glycine 40. IMP contacts are provided by residues 13-16 (DEGK), 38-41 (NAGH), threonine 128, arginine 142, glutamine 223, threonine 238, and arginine 302. Histidine 41 acts as the Proton donor in catalysis. 298–304 (TTTGRPR) is a binding site for substrate. GTP-binding positions include arginine 304, 330–332 (SID), and 412–414 (SVG).

The protein belongs to the adenylosuccinate synthetase family. In terms of assembly, homodimer. It depends on Mg(2+) as a cofactor.

It localises to the cytoplasm. The enzyme catalyses IMP + L-aspartate + GTP = N(6)-(1,2-dicarboxyethyl)-AMP + GDP + phosphate + 2 H(+). It functions in the pathway purine metabolism; AMP biosynthesis via de novo pathway; AMP from IMP: step 1/2. Functionally, plays an important role in the de novo pathway of purine nucleotide biosynthesis. Catalyzes the first committed step in the biosynthesis of AMP from IMP. This chain is Adenylosuccinate synthetase, found in Geobacillus sp. (strain WCH70).